The sequence spans 171 residues: Ribosome maturation factor RimM (171 aa).

The 74-residue stretch at 96-169 folds into the PRC barrel domain; sequence EGEFFIADMI…KMIIDPIKGM (74 aa).

It belongs to the RimM family. Binds ribosomal protein uS19.

The protein localises to the cytoplasm. In terms of biological role, an accessory protein needed during the final step in the assembly of 30S ribosomal subunit, possibly for assembly of the head region. Essential for efficient processing of 16S rRNA. May be needed both before and after RbfA during the maturation of 16S rRNA. It has affinity for free ribosomal 30S subunits but not for 70S ribosomes. This chain is Ribosome maturation factor RimM, found in Clostridioides difficile (strain 630) (Peptoclostridium difficile).